Consider the following 1129-residue polypeptide: SMC5-SMC6 complex localization factor protein 2 (1129 aa).

Disordered regions lie at residues 71 to 178, 312 to 343, and 955 to 1057; these read VKAR…SILN, NTSS…TEQA, and MLYD…QLEG. The segment covering 72 to 87 has biased composition (basic residues); sequence KARRHTLPHSSHRRSP. The segment covering 93–110 has biased composition (polar residues); sequence LLFQQRPRNSSGQFTHNP. 2 stretches are compositionally biased toward basic and acidic residues: residues 112 to 130 and 149 to 166; these read QKKD…KKEL and RKSE…RPRV. 2 stretches are compositionally biased toward polar residues: residues 169–178 and 324–343; these read QATSSSSILN and TGRS…TEQA. Composition is skewed to acidic residues over residues 999-1014 and 1033-1048; these read ESEE…EEDW and SAED…EEES.

The protein belongs to the FAM178 family.

The protein resides in the nucleus. In terms of biological role, plays a role in the DNA damage response (DDR) pathway by regulating postreplication repair of UV-damaged DNA and genomic stability maintenance. Promotes the recruitment of the SMC5-SMC6 complex to DNA lesions. In Danio rerio (Zebrafish), this protein is SMC5-SMC6 complex localization factor protein 2 (slf2).